The following is a 405-amino-acid chain: CMP-sialic acid transporter 3 (405 aa).

Residues 1-39 (MKNGIAECPACHSKLVSPGSKTISRAYDDHKIRVSSKQR) lie on the Cytoplasmic side of the membrane. Residues 40-60 (VLNVLLVVGDCMLVGLQPVLV) traverse the membrane as a helical segment. Topologically, residues 61–73 (YMSKVDGKFNFSP) are lumenal. The helical transmembrane segment at 74-94 (ISVNFLTEIAKVIFAIVMLLI) threads the bilayer. Residues 95–142 (QARHQKVGEKPLLSVSTFVQAARNNVLLAVPALLYAINNYLKFTMQLY) lie on the Cytoplasmic side of the membrane. A helical membrane pass occupies residues 143–163 (FNPATVKMLSNLKVLVIAVLL). At 164-170 (KMVMKRR) the chain is on the lumenal side. Residues 171-191 (FSIIQWEALALLLIGISVNQL) form a helical membrane-spanning segment. At 192-199 (RSLPEGAT) the chain is on the cytoplasmic side. Residues 200–220 (AIGIPLATGAYVCTVIFVTVP) form a helical membrane-spanning segment. Residues 221-243 (SMASVFNEYALKSQYDTSIYLQN) lie on the Lumenal side of the membrane. Residues 244–264 (LFLYGYGAIFNFLGILGTVIY) form a helical membrane-spanning segment. The Cytoplasmic segment spans residues 265–280 (KGPGSFDILQGHSRAT). A helical membrane pass occupies residues 281 to 301 (MFLILNNAAQGILSSFFFKYA). The Lumenal segment spans residues 302 to 321 (DTILKKYSSTVATIFTGIAS). A helical transmembrane segment spans residues 322-342 (AALFGHVITMNFLLGISIVFI). Over 343-405 (SMHQFFSPLA…SDDRTPLLPR (63 aa)) the chain is Cytoplasmic. A disordered region spans residues 385–405 (GANEEASHRGESDDRTPLLPR). Positions 389–405 (EASHRGESDDRTPLLPR) are enriched in basic and acidic residues.

The protein belongs to the nucleotide-sugar transporter family. CMP-Sialate:CMP antiporter (TC 2.A.7.12) subfamily.

It localises to the golgi apparatus membrane. Its function is as follows. Sugar transporter involved in the transport of CMP-sialic acid from the cytoplasm into the Golgi. In Arabidopsis thaliana (Mouse-ear cress), this protein is CMP-sialic acid transporter 3 (UTR6).